Consider the following 263-residue polypeptide: Insulin-like growth factor-binding protein 1 (263 aa).

The signal sequence occupies residues 1–25; sequence MPEVLAVRAWPLLLSLAVQLGATVG. Positions 28–109 constitute an IGFBP N-terminal domain; it reads QPWRCAPCSA…TRGQGACMTT (82 aa). Intrachain disulfides connect cysteine 32–cysteine 59, cysteine 35–cysteine 61, cysteine 43–cysteine 62, cysteine 50–cysteine 65, cysteine 73–cysteine 86, and cysteine 80–cysteine 106. The segment at 102–131 is disordered; that stretch reads GQGACMTTPSDEATDTKDTTSPENVSPESS. 5 positions are modified to phosphoserine: serine 122, serine 127, serine 130, serine 148, and serine 160. Polar residues predominate over residues 122–131; sequence SPENVSPESS. Tyrosine 162 is subject to Phosphotyrosine. Residues 177–255 enclose the Thyroglobulin type-1 domain; it reads KEPCQRELYK…SVAVRGDPKC (79 aa). Cystine bridges form between cysteine 180-cysteine 210, cysteine 221-cysteine 232, and cysteine 234-cysteine 255. A Phosphoserine modification is found at serine 246. Positions 250 to 252 match the Cell attachment site motif; sequence RGD.

Binds equally well IGF1 and IGF2. Interacts with integrin ITGA5:ITGB1. Interacts with VHL; this interaction inhibits HIF1A degradation.

It localises to the secreted. Its function is as follows. Multifunctional protein that plays a critical role in regulating the availability of IGFs such as IGF1 and IGF2 to their receptors and thereby regulates IGF-mediated cellular processes including cell migration, proliferation, differentiation or apoptosis in a cell-type specific manner. Also plays a positive role in cell migration by interacting with integrin ITGA5:ITGB1 through its RGD motif. Mechanistically, binding to integrins leads to activation of focal adhesion kinase/PTK2 and stimulation of the mitogen-activated protein kinase (MAPK) pathway. Regulates cardiomyocyte apoptosis by suppressing HIF-1alpha/HIF1A degradation through ubiquitination. The polypeptide is Insulin-like growth factor-binding protein 1 (IGFBP1) (Bos taurus (Bovine)).